A 575-amino-acid chain; its full sequence is Probable lysosomal cobalamin transporter (575 aa).

Helical transmembrane passes span 8 to 28, 46 to 66, 95 to 115, 144 to 164, and 188 to 208; these read LIWVVYAVVVVVLFAVASVFI, IVAITSLLATILLLPVDVALV, LVYYILYSLDILLCLLVVPFV, YTLSFIAILIILFLVGVFVPI, and ALTFALGLLITIGMYVYALHT. N-linked (GlcNAc...) asparagine glycosylation occurs at asparagine 233. Transmembrane regions (helical) follow at residues 314–334, 376–396, 420–440, and 504–524; these read LVGLILLLLVLLIWVSMILTA, AIFTMLVLLLFFGTVVGIATV, VMTAILMLSILALNYSISMIV, and FGAIFFWSQFAFIGVYLLALI. Residues 537 to 549 are compositionally biased toward acidic residues; it reads QLDEDAEEAEEEA. Residues 537 to 556 are disordered; the sequence is QLDEDAEEAEEEALLSGSRR.

This sequence belongs to the LIMR family. LMBRD1 subfamily.

Its subcellular location is the lysosome membrane. Probable lysosomal cobalamin transporter. Required to export cobalamin from lysosomes allowing its conversion to cofactors. The protein is Probable lysosomal cobalamin transporter of Emericella nidulans (strain FGSC A4 / ATCC 38163 / CBS 112.46 / NRRL 194 / M139) (Aspergillus nidulans).